The chain runs to 873 residues: Bifunctional uridylyltransferase/uridylyl-removing enzyme (873 aa).

Positions 1-332 (MKYLSPLSLS…HQGEQDDAII (332 aa)) are uridylyltransferase. The uridylyl-removing stretch occupies residues 333 to 692 (IDDDFQRRGR…ISKNASRGGT (360 aa)). The 123-residue stretch at 451-573 (VDEHSIRLLK…VRDEERLDYL (123 aa)) folds into the HD domain. 2 consecutive ACT domains span residues 693-777 (EIFV…RPPR) and 800-873 (LMEF…RLSS).

This sequence belongs to the GlnD family. The cofactor is Mg(2+).

It carries out the reaction [protein-PII]-L-tyrosine + UTP = [protein-PII]-uridylyl-L-tyrosine + diphosphate. The enzyme catalyses [protein-PII]-uridylyl-L-tyrosine + H2O = [protein-PII]-L-tyrosine + UMP + H(+). Uridylyltransferase (UTase) activity is inhibited by glutamine, while glutamine activates uridylyl-removing (UR) activity. In terms of biological role, modifies, by uridylylation and deuridylylation, the PII regulatory proteins (GlnB and homologs), in response to the nitrogen status of the cell that GlnD senses through the glutamine level. Under low glutamine levels, catalyzes the conversion of the PII proteins and UTP to PII-UMP and PPi, while under higher glutamine levels, GlnD hydrolyzes PII-UMP to PII and UMP (deuridylylation). Thus, controls uridylylation state and activity of the PII proteins, and plays an important role in the regulation of nitrogen assimilation and metabolism. The chain is Bifunctional uridylyltransferase/uridylyl-removing enzyme from Aliivibrio fischeri (strain ATCC 700601 / ES114) (Vibrio fischeri).